Reading from the N-terminus, the 147-residue chain is Echinoidin (147 aa).

In terms of domain architecture, C-type lectin spans 1 to 143 (GCCPTFWTSF…STRHYLICKL (143 aa)). 3 disulfides stabilise this stretch: C3/C14, C31/C141, and C116/C132. S38 is a glycosylation site (O-linked (Hex) serine). Positions 39–41 (RGD) match the Cell attachment site motif.

In terms of assembly, homodimer; disulfide-linked. Post-translationally, the identity of the saccharide is not reported in PubMed:3571253, and it is unlikely to be N-acetylgalactosamine. The sugar attached to Ser-38 is represented simply as Hex. Coelemic fluid.

The protein resides in the secreted. Functionally, role in the defense system of the organism against microorganisms. This lectin is specific for Gal-GalNAc. The sequence is that of Echinoidin from Heliocidaris crassispina (Sea urchin).